The sequence spans 240 residues: Transcriptional regulatory protein BaeR (240 aa).

In terms of domain architecture, Response regulatory spans 12-125 (RILIVEDEPK…EVVARVKTIL (114 aa)). 4-aspartylphosphate is present on Asp-61. The segment at residues 131 to 234 (QRELQQQDAE…VYGVGYRWEA (104 aa)) is a DNA-binding region (ompR/PhoB-type).

Post-translationally, phosphorylated by BaeS.

Its subcellular location is the cytoplasm. Functionally, member of the two-component regulatory system BaeS/BaeR. Activates the mdtABCD operon. This is Transcriptional regulatory protein BaeR (baeR) from Escherichia coli O6:H1 (strain CFT073 / ATCC 700928 / UPEC).